We begin with the raw amino-acid sequence, 814 residues long: Echinoderm microtubule-associated protein-like 1 (814 aa).

Residues 31–72 are a coiled coil; that stretch reads SMEVSDRIASLEQRVQMQEDDIQLLKSALADVVRRLNITEEQ. Residues 77–180 are disordered; sequence NRKGPTKARP…ESKPKEPAFS (104 aa). Over residues 92-101 the composition is skewed to polar residues; it reads PLRTTVNNGT. The segment covering 103-115 has biased composition (low complexity); it reads LPKKPSASLPAPS. The segment covering 127–137 has biased composition (polar residues); it reads KSINRTSSSER. Basic and acidic residues predominate over residues 142–152; it reads GRRESSGDSKG. Over residues 155–167 the composition is skewed to low complexity; it reads NRTGSTSSSSSGK. Residues 175 to 814 form a tandem atypical propeller in EMLs region; that stretch reads KEPAFSPEEG…DTSIMQWRVI (640 aa). WD repeat units lie at residues 260 to 309, 314 to 357, 362 to 399, 408 to 445, 449 to 488, 492 to 529, 534 to 571, 577 to 612, 616 to 654, 663 to 700, 708 to 767, and 774 to 813; these read EQLQ…IWDS, TLHV…VWDW, RLAD…FWTL, QGLF…VWGK, RISY…SWNG, KLHK…LQGT, FTPI…LWDA, VWDK…VFDT, DLVT…IYGV, RVGK…YWVP, SVET…LFSY, and APSH…QWRV.

Belongs to the WD repeat EMAP family. As to quaternary structure, homotrimer; self-association is mediated by the N-terminal coiled coil. Does not interact with EML3. Binds unpolymerized tubulins via its WD repeat region. Binds repolymerizing microtubules. Interacts with TASOR. In terms of tissue distribution, detected in adult brain cortex, hippocampus and thalamus. Expressed in the stomach, lungs and in Sertoli cells of the testis.

Its subcellular location is the cytoplasm. The protein localises to the perinuclear region. It is found in the cytoskeleton. Its function is as follows. Modulates the assembly and organization of the microtubule cytoskeleton, and probably plays a role in regulating the orientation of the mitotic spindle and the orientation of the plane of cell division. Required for normal proliferation of neuronal progenitor cells in the developing brain and for normal brain development. Does not affect neuron migration per se. This is Echinoderm microtubule-associated protein-like 1 (Eml1) from Mus musculus (Mouse).